A 381-amino-acid chain; its full sequence is ELMO domain-containing protein 3 (381 aa).

One can recognise an ELMO domain in the interval 170-324; that stretch reads THGRVLQTIY…DLEALAKKSP (155 aa).

In terms of tissue distribution, both isoform 1 and isoform 2 are widely expressed.

It is found in the cell projection. The protein resides in the stereocilium. The protein localises to the kinocilium. Its subcellular location is the cytoplasm. It localises to the cytoskeleton. In terms of biological role, acts as a GTPase-activating protein (GAP) for ARL2 with low specific activity. This chain is ELMO domain-containing protein 3 (Elmod3), found in Mus musculus (Mouse).